A 727-amino-acid polypeptide reads, in one-letter code: LIM domain-binding protein 3 (727 aa).

One can recognise a PDZ domain in the interval 1–84 (MSYSVTLTGP…NLSLTLQKSK (84 aa)). A phosphoserine mark is found at Ser-44, Ser-121, and Ser-123. Residues 86-197 (PIPISTTAPP…GSSQPRQYNN (112 aa)) form a disordered region. A compositionally biased stretch (low complexity) spans 140-156 (PTFSPAFSRPSAFSSLA). Over residues 188 to 197 (GSSQPRQYNN) the composition is skewed to polar residues. Ser-217 bears the Phosphoserine mark. Arg-219 is modified (omega-N-methylarginine). Ser-223 is modified (phosphoserine). 2 disordered regions span residues 284–440 (TEFM…YTPS) and 472–529 (APSV…PQVP). Residues 312–385 (ATTPLLPASA…SAPATHTSYS (74 aa)) are compositionally biased toward low complexity. The segment covering 428 to 440 (PYTPSPAPAYTPS) has biased composition (pro residues). Residues 494 to 513 (DSFSQKFAPGKSTTSISKQT) show a composition bias toward polar residues. 2 positions are modified to omega-N-methylarginine: Arg-516 and Arg-533. 3 LIM zinc-binding domains span residues 549–607 (PLCG…QFFA), 608–667 (PLCA…LFST), and 668–727 (KCHG…TINL).

In terms of assembly, interacts via its LIM domains with various PKC isoforms. Interacts via its PDZ domain with the ACTN2 C-terminal region. Interacts with MYOZ1, MYOZ2 and MYOZ3. As to expression, expressed primarily in skeletal muscle and to a lesser extent in heart. Also detected in brain and placenta.

It is found in the cytoplasm. The protein resides in the perinuclear region. It localises to the cell projection. Its subcellular location is the pseudopodium. The protein localises to the cytoskeleton. It is found in the myofibril. The protein resides in the sarcomere. It localises to the z line. In terms of biological role, may function as an adapter in striated muscle to couple protein kinase C-mediated signaling via its LIM domains to the cytoskeleton. This is LIM domain-binding protein 3 from Homo sapiens (Human).